The following is an 809-amino-acid chain: Poly(A) polymerase (809 aa).

The disordered stretch occupies residues 1–50; that stretch reads MNKNGGPPVANITTSSTTITSTTTTQAKSQLPSSLSVNNLHTTQGSTDQP. Residues 12–25 show a composition bias toward low complexity; the sequence is ITTSSTTITSTTTT. The segment covering 26–50 has biased composition (polar residues); that stretch reads QAKSQLPSSLSVNNLHTTQGSTDQP. Residues 133–135, 146–148, Asp200, Lys262, Tyr271, and 280–281 contribute to the ATP site; these read FGS, DID, and GV. Mg(2+)-binding residues include Asp146, Asp148, and Asp200. Disordered regions lie at residues 529–760 and 785–809; these read FVKD…QQIQ and ISSS…IRGN. Residues 530-540 are compositionally biased toward basic and acidic residues; the sequence is VKDEGPEEPVK. Residues 572-655 show a composition bias toward low complexity; it reads SPITTNINST…TPPTTTTINS (84 aa). Over residues 656–665 the composition is skewed to polar residues; that stretch reads VQPPSAQPTE. Residues 666–706 show a composition bias toward low complexity; sequence NGSSTSNSPTSTSINNTALPPNPTTNSESTIETTITLPTTL. Residues 707–735 are compositionally biased toward polar residues; that stretch reads ESQTSTLKDSNEISTNGTAVATEPTITSP. Composition is skewed to low complexity over residues 736–760 and 785–794; these read SVNI…QQIQ and ISSSSETSQS.

This sequence belongs to the poly(A) polymerase family. It depends on Mg(2+) as a cofactor. Mn(2+) is required as a cofactor.

Its subcellular location is the nucleus. It catalyses the reaction RNA(n) + ATP = RNA(n)-3'-adenine ribonucleotide + diphosphate. In terms of biological role, polymerase that creates the 3'-poly(A) tail of mRNA's. May acquire specificity through interaction with a cleavage and polyadenylation factor. In Dictyostelium discoideum (Social amoeba), this protein is Poly(A) polymerase (papA).